The sequence spans 412 residues: Citrate synthase (412 aa).

Catalysis depends on residues His-305 and Asp-364.

It belongs to the citrate synthase family.

The catalysed reaction is oxaloacetate + acetyl-CoA + H2O = citrate + CoA + H(+). It participates in carbohydrate metabolism; tricarboxylic acid cycle; isocitrate from oxaloacetate: step 1/2. This Rickettsia bellii protein is Citrate synthase (gltA).